A 720-amino-acid polypeptide reads, in one-letter code: Hexanoyl-CoA synthase (720 aa).

The chain crosses the membrane as a helical span at residues 242-262; that stretch reads VDAVVIYLAIVLAGYVVVSIA. 290–293 lines the CoA pocket; that stretch reads RGKK. ATP contacts are provided by residues 477–479, 499–504, Glu-585, and Arg-607; these read GEA and EMCGGT. Gly-615 serves as a coordination point for CoA. Residue Lys-618 participates in ATP binding. Gln-681 lines the CoA pocket.

This sequence belongs to the ATP-dependent AMP-binding enzyme family. Mg(2+) is required as a cofactor. In terms of tissue distribution, accumulates in glandular trichomes, especially in female flowers. Present at low levels in roots, stems and leaves.

It is found in the cytoplasm. The protein resides in the cytosol. Its subcellular location is the membrane. The catalysed reaction is hexanoate + ATP + CoA = hexanoyl-CoA + AMP + diphosphate. It functions in the pathway secondary metabolite biosynthesis; terpenoid biosynthesis. With respect to regulation, inhibitied by high CoA concentrations. In terms of biological role, involved in the biosynthesis of cannabinoids-related terpenophenolic natural products, which have pharmacological activity. Acyl-activating enzyme that catalyzes the conversion of hexanoic acid to hexanoyl-CoA, precursor of the cannabinoid pathway. Can also activate other fatty acids including heptanoate, octanoate and nonanoate. The chain is Hexanoyl-CoA synthase from Cannabis sativa (Hemp).